The following is a 219-amino-acid chain: Octanoyltransferase (219 aa).

Residues 37–219 form the BPL/LPL catalytic domain; it reads EHSPDQLWIL…DFNDVQVILQ (183 aa). Residues 76-83, 143-145, and 156-158 each bind substrate; these read RGGQVTWH, SLG, and GLA. Catalysis depends on Cys174, which acts as the Acyl-thioester intermediate.

The protein belongs to the LipB family.

It localises to the cytoplasm. The catalysed reaction is octanoyl-[ACP] + L-lysyl-[protein] = N(6)-octanoyl-L-lysyl-[protein] + holo-[ACP] + H(+). Its pathway is protein modification; protein lipoylation via endogenous pathway; protein N(6)-(lipoyl)lysine from octanoyl-[acyl-carrier-protein]: step 1/2. Functionally, catalyzes the transfer of endogenously produced octanoic acid from octanoyl-acyl-carrier-protein onto the lipoyl domains of lipoate-dependent enzymes. Lipoyl-ACP can also act as a substrate although octanoyl-ACP is likely to be the physiological substrate. The protein is Octanoyltransferase of Acinetobacter baylyi (strain ATCC 33305 / BD413 / ADP1).